A 200-amino-acid polypeptide reads, in one-letter code: Glutathione S-transferase 1-1 (200 aa).

One can recognise a GST N-terminal domain in the interval 1–73 (GSSPCRSVIM…YLVEKYGKTD (73 aa)). Residues S2, 43 to 45 (HTI), and 57 to 59 (ESR) each bind glutathione. The GST C-terminal domain occupies 79 to 200 (CPKKRAVINQ…AGCLEFKKYF (122 aa)).

It belongs to the GST superfamily. Theta family. In terms of assembly, homodimer.

It carries out the reaction RX + glutathione = an S-substituted glutathione + a halide anion + H(+). The catalysed reaction is 1,1,1-trichloro-2,2-bis(4-chlorophenyl)ethane = 1,1-dichloro-2,2-bis(4-chlorophenyl)ethylene + chloride + H(+). In terms of biological role, conjugation of reduced glutathione to a wide number of exogenous and endogenous hydrophobic electrophiles. Has DDT dehydrochlorinase activity. The sequence is that of Glutathione S-transferase 1-1 (GstD1) from Drosophila teissieri (Fruit fly).